An 816-amino-acid polypeptide reads, in one-letter code: Phosphatidylinositol 4-kinase beta (816 aa).

Disordered stretches follow at residues 1 to 28, 93 to 120, and 249 to 318; these read MGDTVVAPAPLKPASESTPGPPGNNGGS, PPTGIREEDDETEATVASGTAKGARRRR, and HRKR…SFSS. Gly2 carries the post-translational modification N-acetylglycine. The interval 2–68 is interaction with ACBD3; that stretch reads GDTVVAPAPL…VKLSHGGVAS (67 aa). Positions 49–242 constitute a PIK helical domain; it reads QKACQEVLQK…GTKLRRLILS (194 aa). Ser258 is subject to Phosphoserine. Thr263 is modified (phosphothreonine). 7 positions are modified to phosphoserine: Ser266, Ser275, Ser277, Ser284, Ser294, Ser428, and Ser511. The span at 278 to 294 shows a compositional bias: low complexity; it reads DATASISLSSSLKRTAS. Phosphothreonine occurs at positions 517 and 519. The PI3K/PI4K catalytic domain occupies 535–801; the sequence is EPWQEKVRRI…MVDGSMRSIT (267 aa). Residues 541 to 547 form a G-loop region; it reads VRRIREG. Residues 668-676 are catalytic loop; sequence QVKDRHNGN. The tract at residues 687–711 is activation loop; that stretch reads HIDFGFILSSSPRNLGFETSAFKLT.

It belongs to the PI3/PI4-kinase family. Type III PI4K subfamily. In terms of assembly, interacts with ARF1 and ARF3 in the Golgi complex, but not with ARF4, ARF5 or ARF6. Interacts with NCS1/FREQ in a calcium-independent manner. Interacts with CALN1/CABP8 and CALN2/CABP7; in a calcium-dependent manner; this interaction competes with NCS1/FREQ binding. Interacts with ACBD3. Interacts with ARMH3, YWHAB, YWHAE, YWHAG, YWHAH, YWHAQ, YWHAZ and SFN. Interacts with GGA2 (via VHS domain); the interaction is important for PI4KB location at the Golgi apparatus membrane. Interacts with ATG9A. It depends on Mg(2+) as a cofactor. Mn(2+) serves as cofactor.

The protein resides in the endomembrane system. It localises to the mitochondrion outer membrane. Its subcellular location is the rough endoplasmic reticulum membrane. The protein localises to the golgi apparatus. It is found in the golgi apparatus membrane. The enzyme catalyses a 1,2-diacyl-sn-glycero-3-phospho-(1D-myo-inositol) + ATP = a 1,2-diacyl-sn-glycero-3-phospho-(1D-myo-inositol 4-phosphate) + ADP + H(+). Its activity is regulated as follows. Inhibited by wortmannin. Increased kinase activity upon interaction with NCS1/FREQ. In terms of biological role, phosphorylates phosphatidylinositol (PI) in the first committed step in the production of the second messenger inositol-1,4,5,-trisphosphate (PIP). May regulate Golgi disintegration/reorganization during mitosis, possibly via its phosphorylation. Involved in Golgi-to-plasma membrane trafficking. May play an important role in the inner ear development. In Rhinolophus ferrumequinum (Greater horseshoe bat), this protein is Phosphatidylinositol 4-kinase beta (PI4KB).